The sequence spans 261 residues: Cytochrome c oxidase subunit 3 (261 aa).

Residues 1–15 (MTHQTHAYHMVNPSP) are Mitochondrial matrix-facing. Residues 16 to 34 (WPLTGALSALLMTSGLIMW) traverse the membrane as a helical segment. Over 35–40 (FHFNST) the chain is Mitochondrial intermembrane. Residues 41–66 (TLLMLGLTTNMLTMYQWWRDIIREST) traverse the membrane as a helical segment. The Mitochondrial matrix portion of the chain corresponds to 67 to 72 (FQGHHT). Residues 73–105 (PSVQKGLRYGMILFIISEVLFFTGFFWAFYHSS) form a helical membrane-spanning segment. At 106-128 (LAPTPELGGCWPPTGIHPLNPLE) the chain is on the mitochondrial intermembrane side. The chain crosses the membrane as a helical span at residues 129 to 152 (VPLLNTSVLLASGVSITWAHHSLM). The Mitochondrial matrix portion of the chain corresponds to 153-155 (EGN). Residues 156–183 (RNHMLQALFITIALGVYFTLLQASEYYE) traverse the membrane as a helical segment. The Mitochondrial intermembrane portion of the chain corresponds to 184–190 (APFTISD). Residues 191 to 223 (GVYGSTFFVATGFHGLHVIIGSTFLIVCFFRQL) traverse the membrane as a helical segment. At 224–232 (KFHFTSNHH) the chain is on the mitochondrial matrix side. Residues 233 to 256 (FGFEAAAWYWHFVDVVWLFLYVSI) traverse the membrane as a helical segment. Topologically, residues 257 to 261 (YWWGS) are mitochondrial intermembrane.

Belongs to the cytochrome c oxidase subunit 3 family. Component of the cytochrome c oxidase (complex IV, CIV), a multisubunit enzyme composed of 14 subunits. The complex is composed of a catalytic core of 3 subunits MT-CO1, MT-CO2 and MT-CO3, encoded in the mitochondrial DNA, and 11 supernumerary subunits COX4I, COX5A, COX5B, COX6A, COX6B, COX6C, COX7A, COX7B, COX7C, COX8 and NDUFA4, which are encoded in the nuclear genome. The complex exists as a monomer or a dimer and forms supercomplexes (SCs) in the inner mitochondrial membrane with NADH-ubiquinone oxidoreductase (complex I, CI) and ubiquinol-cytochrome c oxidoreductase (cytochrome b-c1 complex, complex III, CIII), resulting in different assemblies (supercomplex SCI(1)III(2)IV(1) and megacomplex MCI(2)III(2)IV(2)).

It localises to the mitochondrion inner membrane. It carries out the reaction 4 Fe(II)-[cytochrome c] + O2 + 8 H(+)(in) = 4 Fe(III)-[cytochrome c] + 2 H2O + 4 H(+)(out). In terms of biological role, component of the cytochrome c oxidase, the last enzyme in the mitochondrial electron transport chain which drives oxidative phosphorylation. The respiratory chain contains 3 multisubunit complexes succinate dehydrogenase (complex II, CII), ubiquinol-cytochrome c oxidoreductase (cytochrome b-c1 complex, complex III, CIII) and cytochrome c oxidase (complex IV, CIV), that cooperate to transfer electrons derived from NADH and succinate to molecular oxygen, creating an electrochemical gradient over the inner membrane that drives transmembrane transport and the ATP synthase. Cytochrome c oxidase is the component of the respiratory chain that catalyzes the reduction of oxygen to water. Electrons originating from reduced cytochrome c in the intermembrane space (IMS) are transferred via the dinuclear copper A center (CU(A)) of subunit 2 and heme A of subunit 1 to the active site in subunit 1, a binuclear center (BNC) formed by heme A3 and copper B (CU(B)). The BNC reduces molecular oxygen to 2 water molecules using 4 electrons from cytochrome c in the IMS and 4 protons from the mitochondrial matrix. The polypeptide is Cytochrome c oxidase subunit 3 (MT-CO3) (Pelea capreolus (Gray rhebok)).